A 230-amino-acid chain; its full sequence is Orotidine 5'-phosphate decarboxylase (230 aa).

Substrate contacts are provided by residues aspartate 10, lysine 32, 59–68 (DLKYHDIPNT), threonine 119, arginine 180, glutamine 189, glycine 209, and arginine 210. The active-site Proton donor is the lysine 61.

The protein belongs to the OMP decarboxylase family. Type 1 subfamily. Homodimer.

It carries out the reaction orotidine 5'-phosphate + H(+) = UMP + CO2. It participates in pyrimidine metabolism; UMP biosynthesis via de novo pathway; UMP from orotate: step 2/2. Its function is as follows. Catalyzes the decarboxylation of orotidine 5'-monophosphate (OMP) to uridine 5'-monophosphate (UMP). The polypeptide is Orotidine 5'-phosphate decarboxylase (Glaesserella parasuis serovar 5 (strain SH0165) (Haemophilus parasuis)).